The sequence spans 483 residues: NADPH:adrenodoxin oxidoreductase, mitochondrial (483 aa).

A mitochondrion-targeting transit peptide spans 1 to 14 (MSRYLARYMVSRYF). FAD is bound by residues Ala32, Asp53, Leu61, and Leu97. Residues 169–172 (QGNV), 213–214 (RR), and Glu225 each bind NADP(+). Residues Trp391 and 398-400 (GII) each bind FAD. Gly398 is a binding site for NADP(+).

It belongs to the ferredoxin--NADP reductase type 1 family. FAD serves as cofactor.

Its subcellular location is the mitochondrion. It catalyses the reaction 2 reduced [adrenodoxin] + NADP(+) + H(+) = 2 oxidized [adrenodoxin] + NADPH. Associates in vitro with the adrenodoxin-like protein MFDX1 to form an efficient low potential electron transfer chain that is able to reduce cytochrome C. Functions as accessory mitochondrial protein involved with BIO2 in the plant biotin synthase reaction. This Arabidopsis thaliana (Mouse-ear cress) protein is NADPH:adrenodoxin oxidoreductase, mitochondrial.